The chain runs to 185 residues: Adenine phosphoribosyltransferase (185 aa).

The protein belongs to the purine/pyrimidine phosphoribosyltransferase family. Homodimer.

It localises to the cytoplasm. It catalyses the reaction AMP + diphosphate = 5-phospho-alpha-D-ribose 1-diphosphate + adenine. The protein operates within purine metabolism; AMP biosynthesis via salvage pathway; AMP from adenine: step 1/1. Functionally, catalyzes a salvage reaction resulting in the formation of AMP, that is energically less costly than de novo synthesis. The polypeptide is Adenine phosphoribosyltransferase (Shewanella denitrificans (strain OS217 / ATCC BAA-1090 / DSM 15013)).